A 55-amino-acid chain; its full sequence is Large ribosomal subunit protein bL33 (55 aa).

It belongs to the bacterial ribosomal protein bL33 family.

This chain is Large ribosomal subunit protein bL33, found in Bordetella avium (strain 197N).